The sequence spans 152 residues: Ribosomal RNA large subunit methyltransferase H (152 aa).

Residues Leu71, Gly101, and 120–125 each bind S-adenosyl-L-methionine; that span reads LSKLTF.

Belongs to the RNA methyltransferase RlmH family. In terms of assembly, homodimer.

It is found in the cytoplasm. The enzyme catalyses pseudouridine(1915) in 23S rRNA + S-adenosyl-L-methionine = N(3)-methylpseudouridine(1915) in 23S rRNA + S-adenosyl-L-homocysteine + H(+). Functionally, specifically methylates the pseudouridine at position 1915 (m3Psi1915) in 23S rRNA. The polypeptide is Ribosomal RNA large subunit methyltransferase H (Thermosipho melanesiensis (strain DSM 12029 / CIP 104789 / BI429)).